We begin with the raw amino-acid sequence, 200 residues long: ATP synthase subunit s, mitochondrial (200 aa).

Residues 1-25 (MMMFGKISRQLFSLKKIPWSCDSRY) constitute a mitochondrion transit peptide. The interval 1-61 (MMMFGKISRQ…SEWLLRCGAK (61 aa)) is N-terminal domain. G59 provides a ligand contact to Mg(2+). 4 LRR repeats span residues 62-87 (VRYC…RYKI), 88-116 (QAID…RITL), 117-141 (CRCH…KSLL), and 142-173 (ELEI…LSDL). Position 93 (T93) interacts with Mg(2+).

The protein belongs to the ATP synthase subunit s family. Homotetramer. Associates with ATP synthase.

The protein resides in the mitochondrion. Its subcellular location is the mitochondrion inner membrane. Its function is as follows. Involved in regulation of mitochondrial membrane ATP synthase. Necessary for H(+) conduction of ATP synthase. Facilitates energy-driven catalysis of ATP synthesis by blocking a proton leak through an alternative proton exit pathway. The chain is ATP synthase subunit s, mitochondrial from Rattus norvegicus (Rat).